Here is a 1486-residue protein sequence, read N- to C-terminus: Chromosome partition protein MukB (1486 aa).

34-41 (GGNGAGKS) provides a ligand contact to ATP. Coiled-coil stretches lie at residues 326 to 418 (LEAD…QYNQ), 444 to 480 (LETFQAKELEATEKMLSLEQKMSMAQTAHSQFEQAYQ), and 509 to 603 (RHLA…RAPV). The tract at residues 666–783 (PGGSEDQRLN…EVPLFGRAAR (118 aa)) is flexible hinge. Coiled coils occupy residues 835–923 (EAEI…AKLE), 977–1115 (EMLS…TAKA), and 1209–1266 (VEAI…QNVS).

It belongs to the SMC family. MukB subfamily. Homodimerization via its hinge domain. Binds to DNA via its C-terminal region. Interacts, and probably forms a ternary complex, with MukE and MukF via its C-terminal region. The complex formation is stimulated by calcium or magnesium. Interacts with tubulin-related protein FtsZ.

It localises to the cytoplasm. It is found in the nucleoid. Its function is as follows. Plays a central role in chromosome condensation, segregation and cell cycle progression. Functions as a homodimer, which is essential for chromosome partition. Involved in negative DNA supercoiling in vivo, and by this means organize and compact chromosomes. May achieve or facilitate chromosome segregation by condensation DNA from both sides of a centrally located replisome during cell division. The sequence is that of Chromosome partition protein MukB from Escherichia coli (strain SMS-3-5 / SECEC).